The sequence spans 255 residues: EEF1A lysine methyltransferase 4 (255 aa).

Positions 26 and 30 each coordinate S-adenosyl-L-methionine. Phosphotyrosine is present on tyrosine 39. S-adenosyl-L-methionine is bound by residues tryptophan 41, glycine 66, 88-89 (DY), 113-114 (DV), and lysine 130. A Required for methyltransferase activity motif is present at residues 129–134 (EKGTLD).

This sequence belongs to the methyltransferase superfamily.

It carries out the reaction L-lysyl-[protein] + S-adenosyl-L-methionine = N(6)-methyl-L-lysyl-[protein] + S-adenosyl-L-homocysteine + H(+). The catalysed reaction is N(6)-methyl-L-lysyl-[protein] + S-adenosyl-L-methionine = N(6),N(6)-dimethyl-L-lysyl-[protein] + S-adenosyl-L-homocysteine + H(+). It catalyses the reaction N(6),N(6)-dimethyl-L-lysyl-[protein] + S-adenosyl-L-methionine = N(6),N(6),N(6)-trimethyl-L-lysyl-[protein] + S-adenosyl-L-homocysteine + H(+). Functionally, protein-lysine methyltransferase that efficiently catalyzes three successive methylations on 'Lys-36' in eukaryotic translation elongation factor 1 alpha (EEF1A1 or EEF1A2). In Mus musculus (Mouse), this protein is EEF1A lysine methyltransferase 4.